Reading from the N-terminus, the 259-residue chain is Adenosylcobinamide-GDP ribazoletransferase (259 aa).

A run of 5 helical transmembrane segments spans residues 43 to 63, 64 to 84, 116 to 136, 141 to 161, and 185 to 205; these read LAGAVITAPAGLLLALMLGLG, ASSMVAAFAAIGLQVLLTGAL, FGVLALVFGVGLRVAALASLV, PINVALVMIGIAAVSRALMVW, and TLYTALFLGLAVAVVTIAPVT.

The protein belongs to the CobS family. Mg(2+) serves as cofactor.

It is found in the cell inner membrane. The catalysed reaction is alpha-ribazole + adenosylcob(III)inamide-GDP = adenosylcob(III)alamin + GMP + H(+). It catalyses the reaction alpha-ribazole 5'-phosphate + adenosylcob(III)inamide-GDP = adenosylcob(III)alamin 5'-phosphate + GMP + H(+). Its pathway is cofactor biosynthesis; adenosylcobalamin biosynthesis; adenosylcobalamin from cob(II)yrinate a,c-diamide: step 7/7. Functionally, joins adenosylcobinamide-GDP and alpha-ribazole to generate adenosylcobalamin (Ado-cobalamin). Also synthesizes adenosylcobalamin 5'-phosphate from adenosylcobinamide-GDP and alpha-ribazole 5'-phosphate. The sequence is that of Adenosylcobinamide-GDP ribazoletransferase from Allorhizobium ampelinum (strain ATCC BAA-846 / DSM 112012 / S4) (Agrobacterium vitis (strain S4)).